Reading from the N-terminus, the 387-residue chain is Sorting nexin-7 (387 aa).

Residues 30–151 (KDLFITVDEP…IFLTAQAWEL (122 aa)) enclose the PX domain. The a 1,2-diacyl-sn-glycero-3-phospho-(1D-myo-inositol-3-phosphate) site is built by R73, Q75, K103, and R117. Positions 178 to 387 (GVKNRPEEFM…HLEEASEDKP (210 aa)) constitute a BAR domain.

Belongs to the sorting nexin family. In terms of assembly, heterodimer; heterodimerizes with SNX4.

The protein resides in the early endosome membrane. In terms of biological role, involved in the regulation of endocytosis and in several stages of intracellular trafficking. Together with SNX4, involved in autophagosome assembly by regulating trafficking and recycling of phospholipid scramblase ATG9A. This Homo sapiens (Human) protein is Sorting nexin-7.